Consider the following 299-residue polypeptide: Ribosomal RNA small subunit methyltransferase H (299 aa).

S-adenosyl-L-methionine is bound by residues 36–38 (GGH), Asp-55, Asp-103, and Gln-110. Composition is skewed to basic and acidic residues over residues 268 to 282 (KPVR…ENPR) and 289 to 299 (RAAERIEKGGD). The disordered stretch occupies residues 268–299 (KPVRPSEEEIRENPRARSGRLRAAERIEKGGD).

Belongs to the methyltransferase superfamily. RsmH family.

The protein localises to the cytoplasm. It catalyses the reaction cytidine(1402) in 16S rRNA + S-adenosyl-L-methionine = N(4)-methylcytidine(1402) in 16S rRNA + S-adenosyl-L-homocysteine + H(+). Functionally, specifically methylates the N4 position of cytidine in position 1402 (C1402) of 16S rRNA. This chain is Ribosomal RNA small subunit methyltransferase H, found in Thermotoga petrophila (strain ATCC BAA-488 / DSM 13995 / JCM 10881 / RKU-1).